The sequence spans 150 residues: Phosphopantetheine adenylyltransferase (150 aa).

T15 provides a ligand contact to substrate. ATP contacts are provided by residues 15–16 and H23; that span reads TF. Substrate is bound by residues I80 and R94. ATP is bound by residues 95–97, E105, and 130–136; these read GIR and LENISSR.

Belongs to the bacterial CoaD family. In terms of assembly, homohexamer. Mg(2+) serves as cofactor.

The protein localises to the cytoplasm. It catalyses the reaction (R)-4'-phosphopantetheine + ATP + H(+) = 3'-dephospho-CoA + diphosphate. It functions in the pathway cofactor biosynthesis; coenzyme A biosynthesis; CoA from (R)-pantothenate: step 4/5. Functionally, reversibly transfers an adenylyl group from ATP to 4'-phosphopantetheine, yielding dephospho-CoA (dPCoA) and pyrophosphate. The chain is Phosphopantetheine adenylyltransferase from Malacoplasma penetrans (strain HF-2) (Mycoplasma penetrans).